Consider the following 89-residue polypeptide: Acyl-CoA-binding protein (89 aa).

In terms of domain architecture, ACB spans 3 to 88; the sequence is LKEEFEEHAE…VKQLFEAAGS (86 aa). An acyl-CoA is bound by residues 30-34, Lys56, and Tyr75; that span reads YGLYK.

This sequence belongs to the ACBP family.

Its function is as follows. Binds medium- and long-chain acyl-CoA esters with very high affinity and may function as an intracellular carrier of acyl-CoA esters. This is Acyl-CoA-binding protein from Gossypium hirsutum (Upland cotton).